Here is a 270-residue protein sequence, read N- to C-terminus: Phosphatidylglycerol--prolipoprotein diacylglyceryl transferase (270 aa).

4 helical membrane-spanning segments follow: residues 19 to 39 (FPVY…LWLA), 56 to 76 (LVLI…VIFE), 92 to 112 (QGGL…ILFA), and 116 to 136 (GVSF…GQAI). R138 serves as a coordination point for a 1,2-diacyl-sn-glycero-3-phospho-(1'-sn-glycerol). Transmembrane regions (helical) follow at residues 178–198 (HPTF…LLAL), 206–226 (GELF…VEGL), and 236–256 (LRIA…FIIV).

The protein belongs to the Lgt family.

Its subcellular location is the cell membrane. The enzyme catalyses L-cysteinyl-[prolipoprotein] + a 1,2-diacyl-sn-glycero-3-phospho-(1'-sn-glycerol) = an S-1,2-diacyl-sn-glyceryl-L-cysteinyl-[prolipoprotein] + sn-glycerol 1-phosphate + H(+). The protein operates within protein modification; lipoprotein biosynthesis (diacylglyceryl transfer). Functionally, catalyzes the transfer of the diacylglyceryl group from phosphatidylglycerol to the sulfhydryl group of the N-terminal cysteine of a prolipoprotein, the first step in the formation of mature lipoproteins. The chain is Phosphatidylglycerol--prolipoprotein diacylglyceryl transferase from Bacillus cereus (strain G9842).